An 88-amino-acid polypeptide reads, in one-letter code: Phosphocarrier protein HPr (88 aa).

An HPr domain is found at 1 to 88 (MEQNSYVIID…DVLSKEGLTK (88 aa)). His-15 (pros-phosphohistidine intermediate) is an active-site residue. Ser-46 carries the post-translational modification Phosphoserine; by HPrK/P.

It localises to the cytoplasm. With respect to regulation, phosphorylation on Ser-46 inhibits the phosphoryl transfer from enzyme I to HPr. Its function is as follows. General (non sugar-specific) component of the phosphoenolpyruvate-dependent sugar phosphotransferase system (sugar PTS). This major carbohydrate active-transport system catalyzes the phosphorylation of incoming sugar substrates concomitantly with their translocation across the cell membrane. The phosphoryl group from phosphoenolpyruvate (PEP) is transferred to the phosphoryl carrier protein HPr by enzyme I. Phospho-HPr then transfers it to the PTS EIIA domain. Functionally, P-Ser-HPr interacts with the catabolite control protein A (CcpA), forming a complex that binds to DNA at the catabolite response elements cre, operator sites preceding a large number of catabolite-regulated genes. Thus, P-Ser-HPr is a corepressor in carbon catabolite repression (CCR), a mechanism that allows bacteria to coordinate and optimize the utilization of available carbon sources. P-Ser-HPr also plays a role in inducer exclusion, in which it probably interacts with several non-PTS permeases and inhibits their transport activity. The chain is Phosphocarrier protein HPr (ptsH) from Staphylococcus aureus (strain MSSA476).